Reading from the N-terminus, the 396-residue chain is Elongation factor Tu 1 (396 aa).

The region spanning 10–206 (KPHINVGTIG…VLDSYIPEPQ (197 aa)) is the tr-type G domain. A G1 region spans residues 19 to 26 (GHVDHGKT). 19–26 (GHVDHGKT) lines the GTP pocket. Thr26 serves as a coordination point for Mg(2+). Residues 60–64 (GITIN) are G2. Positions 81–84 (DCPG) are G3. GTP is bound by residues 81–85 (DCPGH) and 136–139 (NKAD). Positions 136 to 139 (NKAD) are G4. Residues 174–176 (SAL) are G5.

The protein belongs to the TRAFAC class translation factor GTPase superfamily. Classic translation factor GTPase family. EF-Tu/EF-1A subfamily. In terms of assembly, monomer.

Its subcellular location is the cytoplasm. It catalyses the reaction GTP + H2O = GDP + phosphate + H(+). Functionally, GTP hydrolase that promotes the GTP-dependent binding of aminoacyl-tRNA to the A-site of ribosomes during protein biosynthesis. In Nitrosomonas eutropha (strain DSM 101675 / C91 / Nm57), this protein is Elongation factor Tu 1.